Reading from the N-terminus, the 415-residue chain is Serine hydroxymethyltransferase (415 aa).

Residues leucine 119 and 123–125 (GHL) each bind (6S)-5,6,7,8-tetrahydrofolate. N6-(pyridoxal phosphate)lysine is present on lysine 228. 353–355 (SPF) contributes to the (6S)-5,6,7,8-tetrahydrofolate binding site.

The protein belongs to the SHMT family. Homodimer. The cofactor is pyridoxal 5'-phosphate.

It is found in the cytoplasm. It carries out the reaction (6R)-5,10-methylene-5,6,7,8-tetrahydrofolate + glycine + H2O = (6S)-5,6,7,8-tetrahydrofolate + L-serine. The protein operates within one-carbon metabolism; tetrahydrofolate interconversion. Its pathway is amino-acid biosynthesis; glycine biosynthesis; glycine from L-serine: step 1/1. Its function is as follows. Catalyzes the reversible interconversion of serine and glycine with tetrahydrofolate (THF) serving as the one-carbon carrier. Also exhibits THF-independent aldolase activity toward beta-hydroxyamino acids, producing glycine and aldehydes, via a retro-aldol mechanism. This chain is Serine hydroxymethyltransferase, found in Halorubrum lacusprofundi (strain ATCC 49239 / DSM 5036 / JCM 8891 / ACAM 34).